A 72-amino-acid polypeptide reads, in one-letter code: Male-specific sperm protein Mst84Dd (72 aa).

Belongs to the MST(3)CGP family. As to expression, testis.

The protein is Male-specific sperm protein Mst84Dd (Mst84Dd) of Drosophila melanogaster (Fruit fly).